Consider the following 757-residue polypeptide: Centrosomal protein of 68 kDa (757 aa).

Composition is skewed to basic and acidic residues over residues 1–17 (MALGEEKAEAEASEDTK) and 86–96 (ANREPVAERSE). Disordered stretches follow at residues 1–47 (MALG…RLEA), 67–158 (WIGT…PSLA), 192–259 (QPSS…GGDA), 311–480 (PGPQ…ESDD), 509–551 (PTGD…SGDP), and 597–618 (LDRWPFSDPDVEGQLPRKGGEQ). Residues 125 to 144 (LSSSEEFPQTLSLPRTTTIC) show a composition bias toward polar residues. 2 stretches are compositionally biased toward low complexity: residues 192 to 206 (QPSSCSISASSTGSS) and 224 to 240 (VSSSLEPVVPQEPSSVV). Ser-332 is modified (phosphoserine; by PLK1). Polar residues predominate over residues 339–355 (FSVSPASTLKSPTNVSP). Basic and acidic residues-rich tracts occupy residues 405–432 (GSRDARWERREPALRGAKDRLTIGKHLD) and 439–456 (RTRDRGWPSPRPEREKRT). Residues 457-467 (SQSARRPTCTE) are compositionally biased toward polar residues. A phosphoserine mark is found at Ser-472 and Ser-478. The segment covering 524–543 (SDGPASFPSSSSQSQLPPGA) has biased composition (low complexity).

In terms of assembly, interacts with CNTLN; the interaction recruits CEP68 to the centrosome. Interacts with the SCF(FBXW11) complex which contains SKP1, CUL1 and FBXW11; the interaction is probably mediated by FBXW11 and the complex also contains CDK5RAP2 and PCNT. Also interacts with F-box protein BTRC. Interacts with serine/threonine-protein kinase PLK1; the interaction leads to phosphorylation of CEP68 and its subsequent degradation. Interacts with NEK2; the interaction leads to phosphorylation of CEP68. In terms of processing, phosphorylation by PLK1 is required for binding to BTRC in prometaphase. Phosphorylated directly or indirectly by NEK2. NEK2-mediated phosphorylation promotes CEP68 dissociation from the centrosome and its degradation at the onset of mitosis. Ubiquitinated and targeted for proteasomal degradation in early mitosis by the SCF(BTRC) and/or SCF(FBXW11) E3 ubiquitin-protein ligase complexes. Degradation is complete by prometaphase and is required for removal of CDK5RAP2 from the peripheral pericentriolar material and subsequent centriole separation.

It localises to the cytoplasm. The protein resides in the cytoskeleton. It is found in the microtubule organizing center. The protein localises to the centrosome. Functionally, involved in maintenance of centrosome cohesion, probably as part of a linker structure which prevents centrosome splitting. Required for localization of CDK5RAP2 to the centrosome during interphase. Contributes to CROCC/rootletin filament formation. In Homo sapiens (Human), this protein is Centrosomal protein of 68 kDa (CEP68).